The following is a 342-amino-acid chain: S-adenosylmethionine:tRNA ribosyltransferase-isomerase (342 aa).

Belongs to the QueA family. Monomer.

The protein resides in the cytoplasm. It catalyses the reaction 7-aminomethyl-7-carbaguanosine(34) in tRNA + S-adenosyl-L-methionine = epoxyqueuosine(34) in tRNA + adenine + L-methionine + 2 H(+). It participates in tRNA modification; tRNA-queuosine biosynthesis. Its function is as follows. Transfers and isomerizes the ribose moiety from AdoMet to the 7-aminomethyl group of 7-deazaguanine (preQ1-tRNA) to give epoxyqueuosine (oQ-tRNA). This Streptococcus pneumoniae (strain ATCC BAA-255 / R6) protein is S-adenosylmethionine:tRNA ribosyltransferase-isomerase.